Reading from the N-terminus, the 551-residue chain is Probable inorganic carbon transporter subunit DabB2 (551 aa).

14 consecutive transmembrane segments (helical) span residues 6 to 26 (SHTTGLLLLAMPALLLMAAVI), 42 to 62 (VQWTSFAAFGLALLAVVSFLF), 65 to 85 (QQNLMLGAGSLPAGLGLLALS), 86 to 106 (IQVNGLTLVLASLVSFVLSVI), 132 to 152 (GFFLLVVISGNLGLFTLAIIA), 187 to 207 (LLLAATVLIGHQIGSLEFSQI), 217 to 237 (LSIALHVAAWLIVLAAILKSA), 252 to 272 (PTPVSALMHAGVVYSGAIIVL), 284 to 304 (ALLLLALIGLMTLAIGSLVML), 321 to 341 (LGFMMLELGLGLFGLALLHLV), 374 to 394 (VVAWFTTVIVSGLFTLGIAAA), 404 to 424 (MLPAVLTIIALATAQLMLKAL), 434 to 454 (VAAGAAIAMTGVYVFLHEVFI), and 469 to 489 (PLLDLLLMAITIITFLFVAWL).

It belongs to the inorganic carbon transporter (TC 9.A.2) DabB family. As to quaternary structure, forms a complex with DabA2, possibly a heterodimer.

It localises to the cell inner membrane. Its activity is regulated as follows. Uptake of inorganic carbon by cells in the presence of thiosulphate is fully inhibited by the uncouplers carbonyl cyanide m-chlorophenyl hydrazone (CCCP), carbonyl cyanide p-trifluoromethoxyphenyl hydrazone (FCCP), S13 or SF6847. Not inhibited by the ATPase inhibitor N,N-dicyclohexylcarbodiimide (DCCD). Inorganic carbon uptake is inhibited by the ionophore carbonyl cyanide m-chlorophenyl hydrazone (CCCP), suggesting uptake is coupled to a cation gradient. In terms of biological role, part of an energy-coupled inorganic carbon pump; its substrate may be carbon dioxide. Expression of both dabA2 and dabB2 (DAB2) restores growth in ambient air to E.coli deleted of its carbonic anhydrase genes (called CAfree, deletion of 'can' and 'cynT'); neither dabA2 or dabB2 alone is sufficient. Rescue is pH-independent, suggesting it transports CO(2) and not carbonate ions. Together the genes allow greater than normal uptake of inorganic carbon by E.coli. Uptake of carbon dioxide rather than bicarbonate has been suggested based on kinetic calculations. The polypeptide is Probable inorganic carbon transporter subunit DabB2 (Halothiobacillus neapolitanus (strain ATCC 23641 / c2) (Thiobacillus neapolitanus)).